Here is a 251-residue protein sequence, read N- to C-terminus: Capsid protein (251 aa).

The Bipartite nuclear localization signal motif lies at 3 to 20 (KRDAPWRLMAGTSKVSRS). Positions 35 to 49 (KAAAWVNRPMYRKPR) match the Nuclear localization signal motif. A zinc finger lies at 63–80 (CEGPCKVQSYEQRHDISH). Residues 96 to 117 (ITHRVGKRFCVKSVYILGKIWM) carry the Nuclear export signal motif. Residues 195–242 (RRFWKVNNHVVYNHQEAGKYENHTENALLLYMACTHASNPVYATLKIR) carry the Bipartite nuclear localization signal motif.

Belongs to the geminiviridae capsid protein family. Homomultimer. Binds to single-stranded and double-stranded viral DNA. Interacts (via nuclear localization signals) with host importin alpha-1a.

The protein resides in the virion. It is found in the host nucleus. Its function is as follows. Encapsidates the viral DNA into characteristic twinned ('geminate') particles. Binds the genomic viral ssDNA and shuttles it into and out of the cell nucleus. The CP of bipartite geminiviruses is not required for cell-to-cell or systemic movement. The protein is Capsid protein of Squash leaf curl virus (SLCV).